Reading from the N-terminus, the 201-residue chain is dTTP/UTP pyrophosphatase (201 aa).

Asp-75 serves as the catalytic Proton acceptor.

Belongs to the Maf family. YhdE subfamily. It depends on a divalent metal cation as a cofactor.

It is found in the cytoplasm. It catalyses the reaction dTTP + H2O = dTMP + diphosphate + H(+). It carries out the reaction UTP + H2O = UMP + diphosphate + H(+). Nucleoside triphosphate pyrophosphatase that hydrolyzes dTTP and UTP. May have a dual role in cell division arrest and in preventing the incorporation of modified nucleotides into cellular nucleic acids. This is dTTP/UTP pyrophosphatase from Pseudomonas fluorescens (strain ATCC BAA-477 / NRRL B-23932 / Pf-5).